We begin with the raw amino-acid sequence, 420 residues long: Proteinase-activated receptor 1 (420 aa).

A signal peptide spans 1–20 (MMELRVLLLLLLLTLLGAMG). Positions 21–42 (SLCLANSDTQAKGAHSNNMTIK) are cleaved as a propeptide — removed for receptor activation. N-linked (GlcNAc...) asparagine glycosylation is present at Asn-38. Residues 43–101 (TFRIFDDSESEFEEIPWDELDESGEGSGDQAPVSRSARKPIRRNITKEAEQYLSSQWLT) lie on the Extracellular side of the membrane. The interval 61-80 (ELDESGEGSGDQAPVSRSAR) is disordered. An N-linked (GlcNAc...) asparagine glycan is attached at Asn-86. Residues 102-127 (KFVPSLYTVVFIVGLPLNLLAIIIFL) traverse the membrane as a helical segment. Topologically, residues 128–136 (FKMKVRKPA) are cytoplasmic. A helical transmembrane segment spans residues 137 to 156 (VVYMLNLAIADVFFVSVLPF). The Extracellular segment spans residues 157 to 175 (KIAYHLSGNDWLFGPGMCR). Cysteines 174 and 253 form a disulfide. Residues 176-197 (IVTAIFYCNMYCSVLLIASISV) traverse the membrane as a helical segment. Topologically, residues 198-217 (DRFLAVVYPMHSLSWRTMSR) are cytoplasmic. Residues 218-238 (AYMACSFIWLISIASTIPLLV) traverse the membrane as a helical segment. The Extracellular segment spans residues 239-267 (TEQTQKIPRLDITTCHDVLDLKDLKDFYI). The chain crosses the membrane as a helical span at residues 268-287 (YYFSSFCLLFFFVPFIITTI). At 288–310 (CYIGIIRSLSSSSIENSCKKTRA) the chain is on the cytoplasmic side. The chain crosses the membrane as a helical span at residues 311–333 (LFLAVVVLCVFIICFGPTNVLFL). Topologically, residues 334 to 345 (THYLQEANEFLY) are extracellular. The chain crosses the membrane as a helical span at residues 346-369 (FAYILSACVGSVSCCLDPLIYYYA). Topologically, residues 370–420 (SSQCQRYLYSLLCCRKVSEPGSSTGQLMSTAMKNDNCSTNAKSSIYKKLLA) are cytoplasmic.

Belongs to the G-protein coupled receptor 1 family. Proteolytic cleavage generates a new N-terminus that functions as a tethered ligand.

The protein localises to the cell membrane. Its function is as follows. High affinity receptor that binds the activated thrombin, leading to calcium release from intracellular stores. The thrombin-activated receptor signaling pathway is mediated through PTX-insensitive G proteins, activation of phospholipase C resulting in the production of 1D-myo-inositol 1,4,5-trisphosphate (InsP3) which binds to InsP3 receptors causing calcium release from the stores. The chain is Proteinase-activated receptor 1 from Xenopus laevis (African clawed frog).